A 256-amino-acid polypeptide reads, in one-letter code: Dihydroorotate dehydrogenase B (NAD(+)), electron transfer subunit (256 aa).

One can recognise an FAD-binding FR-type domain in the interval 1–101 (MKKAHLTVQS…LGPLGNGFPV (101 aa)). FAD-binding positions include 52–55 (RPLS), 69–71 (IYR), and 76–77 (GT). [2Fe-2S] cluster contacts are provided by cysteine 220, cysteine 225, cysteine 228, and cysteine 243.

It belongs to the PyrK family. In terms of assembly, heterotetramer of 2 PyrK and 2 PyrD type B subunits. It depends on [2Fe-2S] cluster as a cofactor. The cofactor is FAD.

It participates in pyrimidine metabolism; UMP biosynthesis via de novo pathway; orotate from (S)-dihydroorotate (NAD(+) route): step 1/1. Its function is as follows. Responsible for channeling the electrons from the oxidation of dihydroorotate from the FMN redox center in the PyrD type B subunit to the ultimate electron acceptor NAD(+). The sequence is that of Dihydroorotate dehydrogenase B (NAD(+)), electron transfer subunit from Bacillus velezensis (strain DSM 23117 / BGSC 10A6 / LMG 26770 / FZB42) (Bacillus amyloliquefaciens subsp. plantarum).